Here is a 98-residue protein sequence, read N- to C-terminus: NADH-ubiquinone oxidoreductase chain 4L (98 aa).

3 helical membrane passes run 1–21 (MSMVYINIFLAFILSFMGLLI), 30–50 (LLCLEGMMLSLFIMMTVTILT), and 61–81 (IILLVFAACEAALGLSLLVMI).

The protein belongs to the complex I subunit 4L family. In terms of assembly, core subunit of respiratory chain NADH dehydrogenase (Complex I) which is composed of 45 different subunits.

It localises to the mitochondrion inner membrane. The catalysed reaction is a ubiquinone + NADH + 5 H(+)(in) = a ubiquinol + NAD(+) + 4 H(+)(out). Its function is as follows. Core subunit of the mitochondrial membrane respiratory chain NADH dehydrogenase (Complex I) which catalyzes electron transfer from NADH through the respiratory chain, using ubiquinone as an electron acceptor. Part of the enzyme membrane arm which is embedded in the lipid bilayer and involved in proton translocation. The protein is NADH-ubiquinone oxidoreductase chain 4L (MT-ND4L) of Martes americana (American marten).